Consider the following 129-residue polypeptide: Fluoride-specific ion channel FluC 2 (129 aa).

Transmembrane regions (helical) follow at residues 3–23 (FLYVGIFGALGGMCRYAMNLW), 32–52 (ATLAVNLIGCFLLAFIMPFLA), 59–79 (LVLLNGIGTGFIGAFTTFSAF), and 90–110 (GEVVLAISYILVSLIGGLVMV). Na(+)-binding residues include Gly-71 and Thr-74.

It belongs to the fluoride channel Fluc/FEX (TC 1.A.43) family.

It localises to the cell membrane. It catalyses the reaction fluoride(in) = fluoride(out). Na(+) is not transported, but it plays an essential structural role and its presence is essential for fluoride channel function. Fluoride-specific ion channel. Important for reducing fluoride concentration in the cell, thus reducing its toxicity. This is Fluoride-specific ion channel FluC 2 from Listeria innocua serovar 6a (strain ATCC BAA-680 / CLIP 11262).